Consider the following 150-residue polypeptide: Transcription antitermination protein NusB (150 aa).

Belongs to the NusB family.

Its function is as follows. Involved in transcription antitermination. Required for transcription of ribosomal RNA (rRNA) genes. Binds specifically to the boxA antiterminator sequence of the ribosomal RNA (rrn) operons. This Streptococcus pyogenes serotype M6 (strain ATCC BAA-946 / MGAS10394) protein is Transcription antitermination protein NusB.